The sequence spans 117 residues: Large ribosomal subunit protein bL20 (117 aa).

This sequence belongs to the bacterial ribosomal protein bL20 family.

In terms of biological role, binds directly to 23S ribosomal RNA and is necessary for the in vitro assembly process of the 50S ribosomal subunit. It is not involved in the protein synthesizing functions of that subunit. The chain is Large ribosomal subunit protein bL20 from Limosilactobacillus reuteri (strain DSM 20016) (Lactobacillus reuteri).